The primary structure comprises 181 residues: Large ribosomal subunit protein uL10 (181 aa).

Belongs to the universal ribosomal protein uL10 family. In terms of assembly, part of the ribosomal stalk of the 50S ribosomal subunit. The N-terminus interacts with L11 and the large rRNA to form the base of the stalk. The C-terminus forms an elongated spine to which L12 dimers bind in a sequential fashion forming a multimeric L10(L12)X complex.

Forms part of the ribosomal stalk, playing a central role in the interaction of the ribosome with GTP-bound translation factors. The sequence is that of Large ribosomal subunit protein uL10 from Protochlamydia amoebophila (strain UWE25).